Reading from the N-terminus, the 205-residue chain is Guanylate kinase (205 aa).

One can recognise a Guanylate kinase-like domain in the interval Pro18–Ile196. ATP is bound at residue Ala25–Thr32.

It belongs to the guanylate kinase family.

It is found in the cytoplasm. The catalysed reaction is GMP + ATP = GDP + ADP. Functionally, essential for recycling GMP and indirectly, cGMP. The protein is Guanylate kinase (gmk) of Chlamydia muridarum (strain MoPn / Nigg).